The following is a 146-amino-acid chain: Cytochrome c-type biogenesis protein CcmE (146 aa).

At 1–7 (MQAKHQR) the chain is on the cytoplasmic side. Residues 8-28 (LILGIIALAAVIAAGFLALVA) form a helical; Signal-anchor for type II membrane protein membrane-spanning segment. Over 29–146 (FKKQAAYFFT…AATQTTLQEK (118 aa)) the chain is Periplasmic. 2 residues coordinate heme: H123 and Y127.

It belongs to the CcmE/CycJ family.

The protein resides in the cell inner membrane. Heme chaperone required for the biogenesis of c-type cytochromes. Transiently binds heme delivered by CcmC and transfers the heme to apo-cytochromes in a process facilitated by CcmF and CcmH. This chain is Cytochrome c-type biogenesis protein CcmE, found in Zymomonas mobilis subsp. mobilis (strain ATCC 31821 / ZM4 / CP4).